Consider the following 596-residue polypeptide: Transcription factor IIIB 70 kDa subunit (596 aa).

Residues 1–33 (MPVCKNCHGTEFERDLSNANNDLVCKACGVVSE) form a TFIIB-type zinc finger. Residues C4, C7, C25, and C28 each coordinate Zn(2+). Tandem repeats lie at residues 90-166 (VSYA…KMVK) and 185-264 (FAEK…EFKN). Disordered stretches follow at residues 363-421 (GENI…NESG) and 509-534 (IATG…EPTK). Residues 365-375 (NIYHEGSENET) show a composition bias toward basic and acidic residues. A phosphoserine mark is found at S381 and S384. Basic and acidic residues predominate over residues 388–421 (EHVEGEDKETEGTEEKVKKVKTKTSEEKKENESG). Positions 516 to 526 (VKKKRTRRRNN) are enriched in basic residues.

This sequence belongs to the TFIIB family. As to quaternary structure, TFIIIB comprises the TATA-binding protein (TBP), the B-related factor (BRF) and the B' component (TFC5).

The protein resides in the nucleus. In terms of biological role, general activator of RNA polymerase III transcription. Interacts with TBP. Binds to Pol III subunit C34 and to the TAU135 component of TFIIIC. In Saccharomyces cerevisiae (strain ATCC 204508 / S288c) (Baker's yeast), this protein is Transcription factor IIIB 70 kDa subunit (BRF1).